Here is a 321-residue protein sequence, read N- to C-terminus: Ribosomal protein L11 methyltransferase (321 aa).

Residues Thr-150, Gly-171, Asp-193, and Asn-256 each contribute to the S-adenosyl-L-methionine site.

This sequence belongs to the methyltransferase superfamily. PrmA family.

It localises to the cytoplasm. The catalysed reaction is L-lysyl-[protein] + 3 S-adenosyl-L-methionine = N(6),N(6),N(6)-trimethyl-L-lysyl-[protein] + 3 S-adenosyl-L-homocysteine + 3 H(+). Functionally, methylates ribosomal protein L11. The protein is Ribosomal protein L11 methyltransferase of Herpetosiphon aurantiacus (strain ATCC 23779 / DSM 785 / 114-95).